Consider the following 412-residue polypeptide: Alanyl-tRNA editing protein Aarsd1-B (412 aa).

The Zn(2+) site is built by His-108, His-112, Cys-208, and His-212.

This sequence belongs to the class-II aminoacyl-tRNA synthetase family. Alax-L subfamily. Requires Zn(2+) as cofactor.

Its subcellular location is the cytoplasm. Functions in trans to edit the amino acid moiety from incorrectly charged tRNA(Ala). This Xenopus laevis (African clawed frog) protein is Alanyl-tRNA editing protein Aarsd1-B (aarsd1-b).